Consider the following 603-residue polypeptide: Aspartate--tRNA(Asp/Asn) ligase (603 aa).

Positions Q205 to K208 are aspartate. Residue R227 participates in L-aspartate binding. ATP-binding positions include R227–E229 and Q236. L-aspartate is bound at residue H463. E497 lines the ATP pocket. R504 contacts L-aspartate. Residue G549–R552 coordinates ATP.

The protein belongs to the class-II aminoacyl-tRNA synthetase family. Type 1 subfamily. As to quaternary structure, homodimer.

The protein resides in the cytoplasm. The enzyme catalyses tRNA(Asx) + L-aspartate + ATP = L-aspartyl-tRNA(Asx) + AMP + diphosphate. Aspartyl-tRNA synthetase with relaxed tRNA specificity since it is able to aspartylate not only its cognate tRNA(Asp) but also tRNA(Asn). Reaction proceeds in two steps: L-aspartate is first activated by ATP to form Asp-AMP and then transferred to the acceptor end of tRNA(Asp/Asn). This chain is Aspartate--tRNA(Asp/Asn) ligase, found in Anaeromyxobacter dehalogenans (strain 2CP-C).